The sequence spans 328 residues: Mitochondrial thiamine pyrophosphate carrier 1 (328 aa).

3 Solcar repeats span residues 12–110, 120–208, and 221–316; these read GTRR…TTQL, PQPI…LRPV, and PPGS…ALKL. 6 helical membrane-spanning segments follow: residues 17 to 37, 79 to 99, 126 to 146, 185 to 205, 227 to 247, and 291 to 308; these read VVLA…PLDV, LTGL…YGGI, FISG…LDLL, SAAV…YEAL, AAAG…LDLV, and GLTV…VTMW.

Belongs to the mitochondrial carrier (TC 2.A.29) family.

It localises to the mitochondrion inner membrane. Mitochondrial transporter that mediates uptake of thiamine pyrophosphate (ThPP) into mitochondria. The chain is Mitochondrial thiamine pyrophosphate carrier 1 (tpc1) from Emericella nidulans (strain FGSC A4 / ATCC 38163 / CBS 112.46 / NRRL 194 / M139) (Aspergillus nidulans).